The sequence spans 287 residues: Syntaxin-11 (287 aa).

Positions 41–71 (LESLYRVIQDIQDENQLLLIDVRRLGRQNVR) form a coiled coil. Residues 204–266 (LNEIESRHRE…GEAKAQVRKA (63 aa)) enclose the t-SNARE coiled-coil homology domain.

This sequence belongs to the syntaxin family. In terms of assembly, interacts with the SNARE proteins SNAP-23 and VAMP.

The protein localises to the membrane. It localises to the golgi apparatus. Its subcellular location is the trans-Golgi network membrane. Its function is as follows. SNARE that acts to regulate protein transport between late endosomes and the trans-Golgi network. This Mus musculus (Mouse) protein is Syntaxin-11 (Stx11).